The following is a 327-amino-acid chain: Aquaporin-1 (327 aa).

The segment at methionine 1–lysine 34 is disordered. The Cytoplasmic segment spans residues methionine 1–histidine 48. A helical membrane pass occupies residues phenylalanine 49–isoleucine 69. Topologically, residues cysteine 70–leucine 91 are extracellular. A helical transmembrane segment spans residues isoleucine 92 to valine 112. At serine 113–cysteine 136 the chain is on the cytoplasmic side. The short motif at asparagine 118–alanine 120 is the NPA 1 element. A helical membrane pass occupies residues valine 137 to methionine 157. Topologically, residues threonine 158 to arginine 176 are extracellular. Residues glycine 177–valine 197 form a helical membrane-spanning segment. At glutamate 198 to asparagine 203 the chain is on the cytoplasmic side. A helical transmembrane segment spans residues phenylalanine 204–tyrosine 224. Topologically, residues threonine 225 to histidine 248 are extracellular. The short motif at asparagine 230–alanine 232 is the NPA 2 element. Residues tryptophan 249–leucine 269 traverse the membrane as a helical segment. The Cytoplasmic segment spans residues glutamine 270–asparagine 327.

It belongs to the MIP/aquaporin (TC 1.A.8) family.

It is found in the endoplasmic reticulum membrane. It localises to the cell membrane. In terms of biological role, water channel required to facilitate the transport of water across membranes. Involved in sporulation, freeze tolerance and osmotolerance. Is non-functional in most laboratory strains. This Saccharomyces cerevisiae (strain Lalvin EC1118 / Prise de mousse) (Baker's yeast) protein is Aquaporin-1 (AQY1).